Consider the following 156-residue polypeptide: Small ribosomal subunit protein uS7 (156 aa).

This sequence belongs to the universal ribosomal protein uS7 family. As to quaternary structure, part of the 30S ribosomal subunit. Contacts proteins S9 and S11.

Functionally, one of the primary rRNA binding proteins, it binds directly to 16S rRNA where it nucleates assembly of the head domain of the 30S subunit. Is located at the subunit interface close to the decoding center, probably blocks exit of the E-site tRNA. The chain is Small ribosomal subunit protein uS7 from Shewanella denitrificans (strain OS217 / ATCC BAA-1090 / DSM 15013).